The chain runs to 267 residues: RWD domain-containing protein 3 (267 aa).

An RWD domain is found at E7 to I114. Interaction with UBE2I/UBC9 stretches follow at residues A13–I15 and V100–E102.

As to quaternary structure, isoform 1 and isoform 2 interact with UBE2I/UBC9. Isoform 1 shows a greater interaction with NFKBIA and HIF1A as compared to isoform 2. Isoform 2 interacts with NCOA2 and NR3C1. Isoform 1 and isoform 2 are expressed in glioma tumors (at protein level). Expressed in a wide number of tissues with highest expression in cerebellum, pituitary, heart, kidney, liver, stomach, pancreas, prostate and spleen. Low levels in thalamus, spinal cord, esophagus, thymus, lung and peripheral blood leukocytes. A higher level expression seen in pituitary tumors as compared to the pituitary gland.

The protein localises to the nucleus. It localises to the cytoplasm. In terms of biological role, enhancer of SUMO conjugation. Via its interaction with UBE2I/UBC9, increases SUMO conjugation to proteins by promoting the binding of E1 and E2 enzymes, thioester linkage between SUMO and UBE2I/UBC9 and transfer of SUMO to specific target proteins which include HIF1A, PIAS, NFKBIA, NR3C1 and TOP1. Isoform 1 and isoform 2 positively regulate the NF-kappa-B signaling pathway by enhancing the sumoylation of NF-kappa-B inhibitor alpha (NFKBIA), promoting its stabilization which consequently leads to an increased inhibition of NF-kappa-B transcriptional activity. Isoform 1 and isoform 2 negatively regulate the hypoxia-inducible factor-1 alpha (HIF1A) signaling pathway by increasing the sumoylation of HIF1A, promoting its stabilization, transcriptional activity and the expression of its target gene VEGFA during hypoxia. Isoform 2 promotes the sumoylation and transcriptional activity of the glucocorticoid receptor NR3C1 and enhances the interaction of SUMO1 and NR3C1 with UBE2I/UBC9. Has no effect on ubiquitination. This chain is RWD domain-containing protein 3 (RWDD3), found in Homo sapiens (Human).